Reading from the N-terminus, the 551-residue chain is Crossover junction endonuclease EME1B (551 aa).

2 disordered regions span residues 1 to 55 and 187 to 239; these read MNDH…PIFV and TTLP…RLEK. Over residues 37–51 the composition is skewed to polar residues; the sequence is SDPTPQKQPPESSFT. A compositionally biased stretch (basic and acidic residues) spans 202 to 239; that stretch reads SKEDKTSAMEEKKLRKEQERLEKAASKAEEAERKRLEK. The stretch at 203–253 forms a coiled coil; sequence KEDKTSAMEEKKLRKEQERLEKAASKAEEAERKRLEKEKKKWEKGKLALKS. Residues 287–484 form the ERCC4 domain; it reads NPIERSIVWT…PSMKSLLKVY (198 aa).

Belongs to the EME1/MMS4 family. In terms of assembly, forms a heterodimer with MUS81. Mg(2+) serves as cofactor. Ca(2+) is required as a cofactor.

Its subcellular location is the nucleus. Interacts with MUS81 to form a DNA structure-specific endonuclease with substrate preference for branched DNA structures with a 5'-end at the branch nick. Typical substrates include 3'-flap structures, D-loops, replication forks, nicked Holliday junctions and also intact Holliday junctions with a reduced efficiency. May be required in mitosis for the processing of stalled or collapsed replication fork intermediates. Plays a role in DNA repair and in genotoxic stress-induced homologous recombination (HR) in somatic cells. Mediates a subset of meiotic recombination events that are insensitive to crossover interference. The chain is Crossover junction endonuclease EME1B (EME1B) from Arabidopsis thaliana (Mouse-ear cress).